Consider the following 979-residue polypeptide: Receptor-type tyrosine-protein phosphatase-like N (979 aa).

The signal sequence occupies residues Met1–Ala34. Residues Ile35 to Pro131 are RESP18 homology domain. Over Ile35–Arg575 the chain is Lumenal. An intrachain disulfide couples Cys53 to Cys62. Basic and acidic residues predominate over residues Ile113–Ser127. Disordered stretches follow at residues Ile113–Ser171, Gly248–Leu272, Ser285–Asp332, and Glu391–Pro466. A phosphoserine mark is found at Ser308 and Ser309. The span at Glu400–Pro409 shows a compositional bias: pro residues. Residues Ser449–Arg575 form a sufficient for dimerization of proICA512 region. Over residues Leu451–Pro466 the composition is skewed to polar residues. Residues Asn506 and Asn524 are each glycosylated (N-linked (GlcNAc...) asparagine). Residues Ser576–Val600 form a helical membrane-spanning segment. The sufficient for dimerization of proICA512 stretch occupies residues Arg601 to Glu732. The Cytoplasmic portion of the chain corresponds to Arg601–Gln979. Positions Asn643–Glu680 are disordered. The segment covering Ser652–Ser677 has biased composition (low complexity). The 261-residue stretch at Leu709–Glu969 folds into the Tyrosine-protein phosphatase domain. A Glycyl lysine isopeptide (Lys-Gly) (interchain with G-Cter in SUMO) cross-link involves residue Lys754.

It belongs to the protein-tyrosine phosphatase family. Receptor class 8 subfamily. Homodimer; shown for the unprocessed protein (proICA512) in the endoplasmic reticulum and resolved during protein maturation as ICA512-TMF seems to be predominantly monomeric in secretory granules; however, ICA512-CCF interacts with ICA512-TMF disrupting the ICA512-TMF:SNTB2 complex. The isolated lumenal RESP18 homology domain has been shown to form disulfide-linked homooligomers. Interacts (via cytoplasmic domain) with phosphorylated SNTB2; this protects PTPRN against cleavage by CAPN1 to produce ICA512-CCF. Dephosphorylation of SNTB2 upon insulin stimulation disrupts the interaction and results in PTPRN cleavage. Interacts with SNX19. ICA512-CCF interacts with PIAS4; in the nucleus. Interacts with STAT5B (phosphorylated); down-regulated by ICA512-CCF sumoylation; ICA512-CCF prevents STAT5B dephosphorylation; ICA512-CCF mediates interaction of STAT5B with PIAS4. Interacts (via RESP18 homology domain) with insulin and proinsulin. Interacts with PTPRN2, PTPRA and PTPRE. In terms of processing, N-glycosylated. Post-translationally, O-glycosylated. Subject to proteolytic cleavage at multiple sites. Subject to cleavage on a pair of basic residues. On exocytosis of secretory granules in pancreatic beta-cells ICA512-TMF is transiently inserted in the plasma-membrane and cleaved by mu-type calpain CPN1 to yield ICA512-CCF. In terms of processing, sumoylated at two sites including Lys-754. Sumoylation decreases interaction with STAT5. As to expression, detected in pituitary (at protein level).

It localises to the membrane. The protein localises to the cytoplasmic vesicle. The protein resides in the secretory vesicle membrane. It is found in the perikaryon. Its subcellular location is the cell projection. It localises to the axon. The protein localises to the synapse. The protein resides in the cell membrane. It is found in the endosome. Its subcellular location is the nucleus. Plays a role in vesicle-mediated secretory processes. Required for normal accumulation of secretory vesicles in hippocampus, pituitary and pancreatic islets. Required for the accumulation of normal levels of insulin-containing vesicles and preventing their degradation. Plays a role in insulin secretion in response to glucose stimuli. Required for normal accumulation of the neurotransmitters norepinephrine, dopamine and serotonin in the brain. In females, but not in males, required for normal accumulation and secretion of pituitary hormones, such as luteinizing hormone (LH) and follicle-stimulating hormone (FSH). Required to maintain normal levels of renin expression and renin release. Seems to lack intrinsic enzyme activity. May regulate catalytic active protein-tyrosine phosphatases such as PTPRA through dimerization. Functionally, ICA512-TMF regulates dynamics and exocytosis of insulin secretory granules (SGs); binding of ICA512-TMF to SNTB2/beta-2-syntrophin is proposed to restrain SGs mobility and exocytosis by tethering them to the actin cytoskeleton depending on UTRN; the function is inhibited by cytoplasmic ICA512-CFF dimerizing with ICA512-TMF and displacing SNTB2. Its function is as follows. ICA512-CCF translocated to the nucleus promotes expression of insulin and other granule-related genes; the function implicates binding to and regulating activity of STAT5B probably by preventing its dephosphorylation and potentially by inducing its sumoylation by recruiting PIAS4. Enhances pancreatic beta-cell proliferation by converging with signaling by STAT5B and STAT3. ICA512-CCF located in the cytoplasm regulates dynamics and exocytosis of insulin secretory granules (SGs) by dimerizing with ICA512-TMF and displacing SNTB2 thus enhancing SGs mobility and exocytosis. This chain is Receptor-type tyrosine-protein phosphatase-like N (PTPRN), found in Bos taurus (Bovine).